The primary structure comprises 221 residues: Epididymal secretory glutathione peroxidase (221 aa).

An N-terminal signal peptide occupies residues 1-21 (MAIQLRVFYLVPLLLASYVQT). Residue cysteine 73 is part of the active site.

It belongs to the glutathione peroxidase family. In terms of tissue distribution, epididymis.

It localises to the secreted. It catalyses the reaction 2 glutathione + H2O2 = glutathione disulfide + 2 H2O. Protects cells and enzymes from oxidative damage, by catalyzing the reduction of hydrogen peroxide, lipid peroxides and organic hydroperoxide, by glutathione. May constitute a glutathione peroxidase-like protective system against peroxide damage in sperm membrane lipids. This Rattus norvegicus (Rat) protein is Epididymal secretory glutathione peroxidase (Gpx5).